The following is a 1397-amino-acid chain: Protein RhsC (1397 aa).

Repeat copies occupy residues 330 to 352, 353 to 374, 375 to 417, 418 to 438, 439 to 460, 461 to 481, 482 to 502, 503 to 525, 526 to 546, 547 to 567, 568 to 588, 589 to 609, 610 to 629, 630 to 650, 651 to 671, 672 to 691, 692 to 711, 712 to 734, 735 to 758, 808 to 828, 829 to 850, 851 to 871, 872 to 894, 895 to 930, 931 to 959, 960 to 984, 985 to 1019, and 1162 to 1186. Positions 330-1186 are 28 X approximate tandem repeats; it reads NTQVRSFTYD…LNEENPHQLQ (857 aa). Residues 1292–1312 are disordered; the sequence is GGQDQRGESKGDGLWGPGKAS.

The protein belongs to the RHS family.

In terms of biological role, rhs elements have a nonessential function. They may play an important role in the natural ecology of the cell. In Escherichia coli (strain K12), this protein is Protein RhsC (rhsC).